The sequence spans 90 residues: Acylphosphatase (90 aa).

The 88-residue stretch at 3–90 folds into the Acylphosphatase-like domain; that stretch reads RYSAIVQGRV…DGEKKFSIKY (88 aa). Active-site residues include arginine 18 and asparagine 36.

It belongs to the acylphosphatase family.

It catalyses the reaction an acyl phosphate + H2O = a carboxylate + phosphate + H(+). The sequence is that of Acylphosphatase (acyP) from Clostridium beijerinckii (strain ATCC 51743 / NCIMB 8052) (Clostridium acetobutylicum).